The chain runs to 209 residues: Uracil phosphoribosyltransferase (209 aa).

5-phospho-alpha-D-ribose 1-diphosphate-binding positions include Arg-79, Arg-104, and 131–139 (DPMLATGNS). Residues Ile-194 and 199-201 (GDA) each bind uracil. Residue Asp-200 participates in 5-phospho-alpha-D-ribose 1-diphosphate binding.

Belongs to the UPRTase family. The cofactor is Mg(2+).

The enzyme catalyses UMP + diphosphate = 5-phospho-alpha-D-ribose 1-diphosphate + uracil. It participates in pyrimidine metabolism; UMP biosynthesis via salvage pathway; UMP from uracil: step 1/1. Allosterically activated by GTP. Its function is as follows. Catalyzes the conversion of uracil and 5-phospho-alpha-D-ribose 1-diphosphate (PRPP) to UMP and diphosphate. This Rhizobium etli (strain CIAT 652) protein is Uracil phosphoribosyltransferase.